The following is a 201-amino-acid chain: Small ribosomal subunit protein uS4c (201 aa).

Residues 89-150 (MRLDNILFRL…KQRSKVLIQN (62 aa)) form the S4 RNA-binding domain.

It belongs to the universal ribosomal protein uS4 family. In terms of assembly, part of the 30S ribosomal subunit. Contacts protein S5. The interaction surface between S4 and S5 is involved in control of translational fidelity.

The protein localises to the plastid. The protein resides in the chloroplast. Functionally, one of the primary rRNA binding proteins, it binds directly to 16S rRNA where it nucleates assembly of the body of the 30S subunit. With S5 and S12 plays an important role in translational accuracy. This is Small ribosomal subunit protein uS4c (rps4) from Acorus calamus (Sweet flag).